A 246-amino-acid chain; its full sequence is Probable transcriptional regulatory protein Rmag_0394 (246 aa).

Belongs to the TACO1 family.

It is found in the cytoplasm. The sequence is that of Probable transcriptional regulatory protein Rmag_0394 from Ruthia magnifica subsp. Calyptogena magnifica.